Consider the following 610-residue polypeptide: Replication factor C large subunit (610 aa).

55-62 (GPAGIGKT) contributes to the ATP binding site. Basic and acidic residues-rich tracts occupy residues 467 to 478 (EKEGNASAEKPE), 502 to 515 (LPEK…KLPE), and 594 to 603 (DGSKKAEPKN). The disordered stretch occupies residues 467–610 (EKEGNASAEK…PKNQKTLFDF (144 aa)).

The protein belongs to the activator 1 small subunits family. RfcL subfamily. As to quaternary structure, heteromultimer composed of small subunits (RfcS) and large subunits (RfcL).

Part of the RFC clamp loader complex which loads the PCNA sliding clamp onto DNA. The protein is Replication factor C large subunit of Methanosarcina mazei (strain ATCC BAA-159 / DSM 3647 / Goe1 / Go1 / JCM 11833 / OCM 88) (Methanosarcina frisia).